The following is a 28-amino-acid chain: Ranatuerin-2LTa (28 aa).

A disulfide bridge links Cys-23 with Cys-28.

Expressed by the skin glands.

The protein localises to the secreted. In terms of biological role, has antibacterial activity. In Rana latastei (Italian agile frog), this protein is Ranatuerin-2LTa.